A 544-amino-acid polypeptide reads, in one-letter code: CTP synthase (544 aa).

Residues 1-266 form an amidoligase domain region; it reads MTKFIFVTGG…DDLICERFGL (266 aa). Residue S13 participates in CTP binding. Position 13 (S13) interacts with UTP. ATP-binding positions include 14–19 and D71; that span reads SLGKGI. Residues D71 and E140 each contribute to the Mg(2+) site. CTP contacts are provided by residues 147–149, 187–192, and K223; these read DIE and KTKPTQ. UTP-binding positions include 187 to 192 and K223; that span reads KTKPTQ. One can recognise a Glutamine amidotransferase type-1 domain in the interval 291–543; the sequence is TVAMVGKYVE…VKAAKNYSEA (253 aa). L-glutamine is bound at residue G354. Catalysis depends on C381, which acts as the Nucleophile; for glutamine hydrolysis. L-glutamine is bound by residues 382–385, E404, and R471; that span reads LGMQ. Active-site residues include H516 and E518.

Belongs to the CTP synthase family. As to quaternary structure, homotetramer.

The catalysed reaction is UTP + L-glutamine + ATP + H2O = CTP + L-glutamate + ADP + phosphate + 2 H(+). It catalyses the reaction L-glutamine + H2O = L-glutamate + NH4(+). It carries out the reaction UTP + NH4(+) + ATP = CTP + ADP + phosphate + 2 H(+). Its pathway is pyrimidine metabolism; CTP biosynthesis via de novo pathway; CTP from UDP: step 2/2. Its activity is regulated as follows. Allosterically activated by GTP, when glutamine is the substrate; GTP has no effect on the reaction when ammonia is the substrate. The allosteric effector GTP functions by stabilizing the protein conformation that binds the tetrahedral intermediate(s) formed during glutamine hydrolysis. Inhibited by the product CTP, via allosteric rather than competitive inhibition. Catalyzes the ATP-dependent amination of UTP to CTP with either L-glutamine or ammonia as the source of nitrogen. Regulates intracellular CTP levels through interactions with the four ribonucleotide triphosphates. The chain is CTP synthase from Psychrobacter arcticus (strain DSM 17307 / VKM B-2377 / 273-4).